Reading from the N-terminus, the 577-residue chain is External alternative NAD(P)H-ubiquinone oxidoreductase B1, mitochondrial (577 aa).

The N-terminal 35 residues, 1–35 (MRGFTYLSKVLHSHSSYSKLLVLCSVSTGGLLVYA), are a transit peptide targeting the mitochondrion. FAD is bound at residue 57–87 (RVVVLGTGWGGTSFLKDVDISSYDVQVVSPR). Position 221 to 257 (221 to 257 (LHFVIVGGGPTGVEFAAELHDYVYEDLVKIYPSVKDF)) interacts with NAD(+). The EF-hand domain occupies 378–413 (KVMEDISTIFEAADKDDSGTLSVEEFRDVLEDIIIR). Ca(2+) is bound by residues Asp-391, Asp-393, Ser-395, Thr-397, and Glu-402. The short motif at 568–577 (YIFGRDSSRI) is the Microbody targeting signal element.

This sequence belongs to the NADH dehydrogenase family. The cofactor is FAD.

The protein resides in the mitochondrion inner membrane. The protein localises to the peroxisome. The catalysed reaction is a quinone + NADH + H(+) = a quinol + NAD(+). It carries out the reaction a ubiquinone + NADH + H(+) = a ubiquinol + NAD(+). With respect to regulation, activity is calcium-dependent with a more pronounced effect at higher pH. Its function is as follows. Calcium-dependent NAD(P)H dehydrogenase. Binds calcium ions. Alternative NADH-ubiquinone oxidoreductase which catalyzes the oxidation of mitochondrial NADH does not translocate protons across the inner mitochondrial membrane. This Solanum tuberosum (Potato) protein is External alternative NAD(P)H-ubiquinone oxidoreductase B1, mitochondrial (NDB1).